The sequence spans 184 residues: ATP synthase subunit b, chloroplastic (184 aa).

A helical transmembrane segment spans residues 27–49 (LATNLINLSVVLGVLIFFGKGVL).

This sequence belongs to the ATPase B chain family. In terms of assembly, F-type ATPases have 2 components, F(1) - the catalytic core - and F(0) - the membrane proton channel. F(1) has five subunits: alpha(3), beta(3), gamma(1), delta(1), epsilon(1). F(0) has four main subunits: a(1), b(1), b'(1) and c(10-14). The alpha and beta chains form an alternating ring which encloses part of the gamma chain. F(1) is attached to F(0) by a central stalk formed by the gamma and epsilon chains, while a peripheral stalk is formed by the delta, b and b' chains.

It localises to the plastid. It is found in the chloroplast thylakoid membrane. F(1)F(0) ATP synthase produces ATP from ADP in the presence of a proton or sodium gradient. F-type ATPases consist of two structural domains, F(1) containing the extramembraneous catalytic core and F(0) containing the membrane proton channel, linked together by a central stalk and a peripheral stalk. During catalysis, ATP synthesis in the catalytic domain of F(1) is coupled via a rotary mechanism of the central stalk subunits to proton translocation. Its function is as follows. Component of the F(0) channel, it forms part of the peripheral stalk, linking F(1) to F(0). This chain is ATP synthase subunit b, chloroplastic, found in Liriodendron tulipifera (Tuliptree).